Consider the following 461-residue polypeptide: Chromosomal replication initiator protein DnaA (461 aa).

The interval 1-68 is domain I, interacts with DnaA modulators; that stretch reads MINAWAQIEH…EKAAASVLGS (68 aa). Residues 68 to 118 form a domain II region; the sequence is SVPTITVVSGEEPAAAPRPVQVPAQKRPAAARTSGAEQMGLPLHYASRSAD. The domain III, AAA+ region stretch occupies residues 119-336; that stretch reads SIKWMHSFDE…SCLRNLLLKA (218 aa). ATP is bound by residues glycine 162, glycine 164, lysine 165, and threonine 166. A domain IV, binds dsDNA region spans residues 337 to 461; sequence RLLNQQITMD…VERNGRIIHP (125 aa).

Belongs to the DnaA family. In terms of assembly, oligomerizes as a right-handed, spiral filament on DNA at oriC.

Its subcellular location is the cytoplasm. In terms of biological role, plays an essential role in the initiation and regulation of chromosomal replication. ATP-DnaA binds to the origin of replication (oriC) to initiate formation of the DNA replication initiation complex once per cell cycle. Binds the DnaA box (a 9 base pair repeat at the origin) and separates the double-stranded (ds)DNA. Forms a right-handed helical filament on oriC DNA; dsDNA binds to the exterior of the filament while single-stranded (ss)DNA is stabiized in the filament's interior. The ATP-DnaA-oriC complex binds and stabilizes one strand of the AT-rich DNA unwinding element (DUE), permitting loading of DNA polymerase. After initiation quickly degrades to an ADP-DnaA complex that is not apt for DNA replication. Binds acidic phospholipids. In Oleidesulfovibrio alaskensis (strain ATCC BAA-1058 / DSM 17464 / G20) (Desulfovibrio alaskensis), this protein is Chromosomal replication initiator protein DnaA.